The sequence spans 291 residues: N-acetylmannosamine kinase (291 aa).

ATP-binding positions include 5–12 (AIDIGGTK) and 132–139 (GVGGGVVS). The Zn(2+) site is built by His-156, Cys-166, Cys-168, and Cys-173.

Belongs to the ROK (NagC/XylR) family. NanK subfamily. As to quaternary structure, homodimer.

It carries out the reaction an N-acyl-D-mannosamine + ATP = an N-acyl-D-mannosamine 6-phosphate + ADP + H(+). Its pathway is amino-sugar metabolism; N-acetylneuraminate degradation; D-fructose 6-phosphate from N-acetylneuraminate: step 2/5. Its function is as follows. Catalyzes the phosphorylation of N-acetylmannosamine (ManNAc) to ManNAc-6-P. In Escherichia coli (strain K12 / MC4100 / BW2952), this protein is N-acetylmannosamine kinase.